A 196-amino-acid polypeptide reads, in one-letter code: MINKIYGKIVDKKESSIIILAFPFEFEILVSSFCKMELRLLEDVEILTYFHFRDDDVKLFGFLNISEREVFENLIGVDGIGPKAALKILSGIKYDAFRLAIAKEDINLISKVKGIGNKIAGKIFLKLRGKLVKGDESSSYMLKFKELEQSIVNMGFDRKLVVVAFREIMLSDKFLILKEAEQEQFLFTETLKRLSV.

The interval 1 to 63 is domain I; sequence MINKIYGKIV…DDDVKLFGFL (63 aa). Positions 64 to 142 are domain II; sequence NISEREVFEN…KGDESSSYML (79 aa). Position 143 (Lys143) is a region of interest, flexible linker. Positions 143 to 196 are domain III; that stretch reads KFKELEQSIVNMGFDRKLVVVAFREIMLSDKFLILKEAEQEQFLFTETLKRLSV.

The protein belongs to the RuvA family. Homotetramer. Forms an RuvA(8)-RuvB(12)-Holliday junction (HJ) complex. HJ DNA is sandwiched between 2 RuvA tetramers; dsDNA enters through RuvA and exits via RuvB. An RuvB hexamer assembles on each DNA strand where it exits the tetramer. Each RuvB hexamer is contacted by two RuvA subunits (via domain III) on 2 adjacent RuvB subunits; this complex drives branch migration. In the full resolvosome a probable DNA-RuvA(4)-RuvB(12)-RuvC(2) complex forms which resolves the HJ.

It localises to the cytoplasm. Its function is as follows. The RuvA-RuvB-RuvC complex processes Holliday junction (HJ) DNA during genetic recombination and DNA repair, while the RuvA-RuvB complex plays an important role in the rescue of blocked DNA replication forks via replication fork reversal (RFR). RuvA specifically binds to HJ cruciform DNA, conferring on it an open structure. The RuvB hexamer acts as an ATP-dependent pump, pulling dsDNA into and through the RuvAB complex. HJ branch migration allows RuvC to scan DNA until it finds its consensus sequence, where it cleaves and resolves the cruciform DNA. The chain is Holliday junction branch migration complex subunit RuvA from Borrelia recurrentis (strain A1).